We begin with the raw amino-acid sequence, 459 residues long: Putrescine aminotransferase (459 aa).

Pyridoxal 5'-phosphate-binding positions include 150 to 151 and Gln-274; that span reads GT. Lys-300 bears the N6-(pyridoxal phosphate)lysine mark. Residue Thr-332 coordinates pyridoxal 5'-phosphate.

This sequence belongs to the class-III pyridoxal-phosphate-dependent aminotransferase family. Putrescine aminotransferase subfamily. Pyridoxal 5'-phosphate serves as cofactor.

The enzyme catalyses an alkane-alpha,omega-diamine + 2-oxoglutarate = an omega-aminoaldehyde + L-glutamate. It carries out the reaction putrescine + 2-oxoglutarate = 1-pyrroline + L-glutamate + H2O. It catalyses the reaction cadaverine + 2-oxoglutarate = 5-aminopentanal + L-glutamate. The protein operates within amine and polyamine degradation; putrescine degradation; 4-aminobutanal from putrescine (transaminase route): step 1/1. Its function is as follows. Catalyzes the aminotransferase reaction from putrescine to 2-oxoglutarate, leading to glutamate and 4-aminobutanal, which spontaneously cyclizes to form 1-pyrroline. This is the first step in one of two pathways for putrescine degradation, where putrescine is converted into 4-aminobutanoate (gamma-aminobutyrate or GABA) via 4-aminobutanal. Also functions as a cadaverine transaminase in a a L-lysine degradation pathway to succinate that proceeds via cadaverine, glutarate and L-2-hydroxyglutarate. The polypeptide is Putrescine aminotransferase (Escherichia fergusonii (strain ATCC 35469 / DSM 13698 / CCUG 18766 / IAM 14443 / JCM 21226 / LMG 7866 / NBRC 102419 / NCTC 12128 / CDC 0568-73)).